A 558-amino-acid polypeptide reads, in one-letter code: 2-isopropylmalate synthase (558 aa).

The 274-residue stretch at 30–303 folds into the Pyruvate carboxyltransferase domain; it reads PIWCSVDLRD…DPKLDFSNIP (274 aa). Residues D39, H242, H244, and N278 each contribute to the Mg(2+) site. Residues 438–558 are regulatory domain; that stretch reads LNNTLCVQDF…GLVSALNRII (121 aa).

It belongs to the alpha-IPM synthase/homocitrate synthase family. LeuA type 2 subfamily. As to quaternary structure, homodimer. Mg(2+) is required as a cofactor.

The protein resides in the cytoplasm. It catalyses the reaction 3-methyl-2-oxobutanoate + acetyl-CoA + H2O = (2S)-2-isopropylmalate + CoA + H(+). The protein operates within amino-acid biosynthesis; L-leucine biosynthesis; L-leucine from 3-methyl-2-oxobutanoate: step 1/4. Functionally, catalyzes the condensation of the acetyl group of acetyl-CoA with 3-methyl-2-oxobutanoate (2-ketoisovalerate) to form 3-carboxy-3-hydroxy-4-methylpentanoate (2-isopropylmalate). The polypeptide is 2-isopropylmalate synthase (Helicobacter hepaticus (strain ATCC 51449 / 3B1)).